A 424-amino-acid polypeptide reads, in one-letter code: Enolase (424 aa).

Position 162 (glutamine 162) interacts with (2R)-2-phosphoglycerate. Catalysis depends on glutamate 204, which acts as the Proton donor. Residues aspartate 241, glutamate 284, and aspartate 311 each contribute to the Mg(2+) site. Lysine 336, arginine 365, serine 366, and lysine 387 together coordinate (2R)-2-phosphoglycerate. The Proton acceptor role is filled by lysine 336.

Belongs to the enolase family. Mg(2+) is required as a cofactor.

The protein localises to the cytoplasm. Its subcellular location is the secreted. It localises to the cell surface. It catalyses the reaction (2R)-2-phosphoglycerate = phosphoenolpyruvate + H2O. The protein operates within carbohydrate degradation; glycolysis; pyruvate from D-glyceraldehyde 3-phosphate: step 4/5. In terms of biological role, catalyzes the reversible conversion of 2-phosphoglycerate (2-PG) into phosphoenolpyruvate (PEP). It is essential for the degradation of carbohydrates via glycolysis. This Mesorhizobium japonicum (strain LMG 29417 / CECT 9101 / MAFF 303099) (Mesorhizobium loti (strain MAFF 303099)) protein is Enolase.